Consider the following 218-residue polypeptide: Probable transaldolase (218 aa).

Residue Lys87 is the Schiff-base intermediate with substrate of the active site.

The protein belongs to the transaldolase family. Type 3B subfamily.

The protein localises to the cytoplasm. The catalysed reaction is D-sedoheptulose 7-phosphate + D-glyceraldehyde 3-phosphate = D-erythrose 4-phosphate + beta-D-fructose 6-phosphate. It participates in carbohydrate degradation; pentose phosphate pathway; D-glyceraldehyde 3-phosphate and beta-D-fructose 6-phosphate from D-ribose 5-phosphate and D-xylulose 5-phosphate (non-oxidative stage): step 2/3. In terms of biological role, transaldolase is important for the balance of metabolites in the pentose-phosphate pathway. This Bacteroides thetaiotaomicron (strain ATCC 29148 / DSM 2079 / JCM 5827 / CCUG 10774 / NCTC 10582 / VPI-5482 / E50) protein is Probable transaldolase.